A 280-amino-acid polypeptide reads, in one-letter code: Protein scylla (280 aa).

The interval 39–96 (LMSKKAKTTTGGSSNGSNATATSTTTSTSSSIKHKQPAGSSNNNVGQSQSKKTKPSGS) is disordered. 2 stretches are compositionally biased toward low complexity: residues 46–69 (TTTG…TSSS) and 77–96 (GSSN…PSGS).

It belongs to the DDIT4 family.

It localises to the cytoplasm. Functionally, inhibits cell growth by regulating the Tor pathway upstream of the Tsc1-Tsc2 complex and downstream of Akt1. Acts as a cell death activator during head development. This chain is Protein scylla (scyl), found in Drosophila melanogaster (Fruit fly).